Reading from the N-terminus, the 404-residue chain is Cysteine desulfurase IscS (404 aa).

Residues 73–74 (AT), N153, Q181, and 201–203 (SAH) contribute to the pyridoxal 5'-phosphate site. Residue K204 is modified to N6-(pyridoxal phosphate)lysine. T241 is a pyridoxal 5'-phosphate binding site. C327 acts as the Cysteine persulfide intermediate in catalysis. C327 provides a ligand contact to [2Fe-2S] cluster.

Belongs to the class-V pyridoxal-phosphate-dependent aminotransferase family. NifS/IscS subfamily. Homodimer. Forms a heterotetramer with IscU, interacts with other sulfur acceptors. It depends on pyridoxal 5'-phosphate as a cofactor.

Its subcellular location is the cytoplasm. It catalyses the reaction (sulfur carrier)-H + L-cysteine = (sulfur carrier)-SH + L-alanine. It functions in the pathway cofactor biosynthesis; iron-sulfur cluster biosynthesis. Functionally, master enzyme that delivers sulfur to a number of partners involved in Fe-S cluster assembly, tRNA modification or cofactor biosynthesis. Catalyzes the removal of elemental sulfur atoms from cysteine to produce alanine. Functions as a sulfur delivery protein for Fe-S cluster synthesis onto IscU, an Fe-S scaffold assembly protein, as well as other S acceptor proteins. The polypeptide is Cysteine desulfurase IscS (Anaeromyxobacter sp. (strain K)).